A 155-amino-acid polypeptide reads, in one-letter code: Transcriptional repressor NrdR (155 aa).

Residues 3-34 (CPFCGNVDTQVKDSRPAEDHVAIRRRRFCPAC) fold into a zinc finger. Residues 49-139 (LVVIKSSGKR…VYKNFQAADD (91 aa)) enclose the ATP-cone domain.

This sequence belongs to the NrdR family. Requires Zn(2+) as cofactor.

In terms of biological role, negatively regulates transcription of bacterial ribonucleotide reductase nrd genes and operons by binding to NrdR-boxes. This chain is Transcriptional repressor NrdR, found in Dinoroseobacter shibae (strain DSM 16493 / NCIMB 14021 / DFL 12).